A 276-amino-acid chain; its full sequence is MSMPLSNALQSQIITDAHFLHHPIVDSEFTRKLKYARMDSENIYLPPLTRGNNHNYDGKSVVEIRKLDISKEPWPFNYVTGACRESDGITTTGRMLYRNLKITSALDEIYGGICKKAHATTELAEGLRLNLFMKSPFDPVEDYTVHEITLGPGCNVPGYAGTTIGYISTLPASQAKRWTNEQPRIDIYIDQIMTVTGVANSSGFALAALLNANIELGNDPIIGIEAYPGTAEIHAKMGYKVIPGDENAPLKRMTLQPSSLPELFELKNGEWNYIGK.

It to E.coli YjfZ.

This is an uncharacterized protein from Escherichia coli (strain K12).